The primary structure comprises 905 residues: uncharacterized protein (905 aa).

WD repeat units follow at residues 42–82 (RSLK…FQAV), 86–128 (GYAR…SDPK), 136–175 (STLDGVSSVCYKKDTPLLLTGSTSRSVHIIDTRQQLDSVS), and 177–217 (VNTQ…SDNY). Ser394 and Ser397 each carry phosphoserine.

The protein belongs to the WD repeat mio family.

This is an uncharacterized protein from Schizosaccharomyces pombe (strain 972 / ATCC 24843) (Fission yeast).